A 955-amino-acid polypeptide reads, in one-letter code: Centrosomal protein of 112 kDa (955 aa).

Residues 277–954 adopt a coiled-coil conformation; that stretch reads QKHDADVQKI…QEELTTYQGR (678 aa).

It is found in the cytoplasm. It localises to the cytoskeleton. The protein localises to the microtubule organizing center. The protein resides in the centrosome. The polypeptide is Centrosomal protein of 112 kDa (CEP112) (Homo sapiens (Human)).